Here is a 37-residue protein sequence, read N- to C-terminus: Mu-agatoxin-Aa1f (37 aa).

4 disulfides stabilise this stretch: C2-C18, C9-C23, C17-C33, and C25-C31. The residue at position 37 (N37) is an Asparagine amide.

This sequence belongs to the neurotoxin 07 (Beta/delta-agtx) family. 03 (aga-4) subfamily. Aga sub-subfamily. In terms of tissue distribution, expressed by the venom gland.

It localises to the secreted. Its function is as follows. Insecticidal neurotoxin that induces an irreversible spastic paralysis when injected into insects. Modifies presynaptic voltage-gated sodium channels (Nav), causing them to open at the normal resting potential of the nerve. This leads to spontaneous release of neurotransmitter and repetitive action potentials in motor neurons. The protein is Mu-agatoxin-Aa1f of Agelenopsis aperta (North American funnel-web spider).